Here is a 111-residue protein sequence, read N- to C-terminus: Cell division protein FtsB (111 aa).

Topologically, residues 1 to 3 are cytoplasmic; the sequence is MRL. The helical transmembrane segment at 4 to 21 threads the bilayer; that stretch reads LFLVLLVLLGLIQYPLWL. At 22–111 the chain is on the periplasmic side; sequence GKGGWFKVWD…PGQTASAPRR (90 aa). A coiled-coil region spans residues 31 to 62; the sequence is DLQRQVAAQHETNDGLRARNAALEAEVRDLAT. Residues 88–111 are disordered; the sequence is VPPGTPVPQPAPGAPGQTASAPRR. The span at 90–100 shows a compositional bias: pro residues; sequence PGTPVPQPAPG. The span at 101 to 111 shows a compositional bias: low complexity; that stretch reads APGQTASAPRR.

It belongs to the FtsB family. As to quaternary structure, part of a complex composed of FtsB, FtsL and FtsQ.

It localises to the cell inner membrane. Functionally, essential cell division protein. May link together the upstream cell division proteins, which are predominantly cytoplasmic, with the downstream cell division proteins, which are predominantly periplasmic. This Bordetella petrii (strain ATCC BAA-461 / DSM 12804 / CCUG 43448) protein is Cell division protein FtsB.